We begin with the raw amino-acid sequence, 520 residues long: Transposase for insertion sequence element IS21-like (520 aa).

Residues 13–78 (YMWYKVRELQ…KYEEYVRGTL (66 aa)) enclose the HTH IS21-type domain. The Integrase catalytic domain occupies 136-312 (LPETPYGEYA…VPSEEFAVEK (177 aa)).

This sequence belongs to the transposase IS21/IS408/IS1162 family.

Involved in the transposition of the insertion sequence. The polypeptide is Transposase for insertion sequence element IS21-like (tnpA) (Bacteroides fragilis).